The following is a 721-amino-acid chain: BRCA1-A complex subunit RAP80 (721 aa).

A disordered region spans residues 1 to 65; it reads MPRRKKKGKE…GLQKTKIKQS (65 aa). Residues 1 to 101 are necessary for transcriptional repression; that stretch reads MPRRKKKGKE…SEQEAREVNS (101 aa). K20 participates in a covalent cross-link: Glycyl lysine isopeptide (Lys-Gly) (interchain with G-Cter in SUMO2). S29 carries the post-translational modification Phosphoserine. K31 is covalently cross-linked (Glycyl lysine isopeptide (Lys-Gly) (interchain with G-Cter in SUMO2)). Phosphoserine is present on residues S44 and S46. Residues 60–78 carry the LR motif motif; sequence TKIKQSSRAKCLAKRKIAQ. Residues K75 and K90 each participate in a glycyl lysine isopeptide (Lys-Gly) (interchain with G-Cter in SUMO2) cross-link. One can recognise a UIM 1 domain in the interval 80 to 99; sequence TEEEQFALALKMSEQEAREV. Positions 93 to 204 are disordered; that stretch reads EQEAREVNSQ…SVSSGSWDQS (112 aa). Positions 97-103 are UIM-linker; the sequence is REVNSQE. The necessary for interaction with NR6A1 N-terminus stretch occupies residues 100-200; it reads NSQEEEEEEL…EEPVSVSSGS (101 aa). S101 carries the phosphoserine modification. Residues 105–124 enclose the UIM 2 domain; it reads EEEELLRKAIAESLNSCRPS. The segment covering 117–130 has biased composition (polar residues); that stretch reads SLNSCRPSDASATR. S140 carries the post-translational modification Phosphoserine. Residues 194–204 show a composition bias toward low complexity; it reads VSVSSGSWDQS. S205 bears the Phosphoserine mark. A Glycyl lysine isopeptide (Lys-Gly) (interchain with G-Cter in SUMO2) cross-link involves residue K245. Residues 270 to 400 form an AIR region; the sequence is TGGTVNYFWG…EEEPTTSHGQ (131 aa). Positions 334 to 369 are disordered; that stretch reads NECGQGEQASEKNEGISEDMGDEDKEERQESRASVW. The span at 349–358 shows a compositional bias: acidic residues; it reads ISEDMGDEDK. Glycyl lysine isopeptide (Lys-Gly) (interchain with G-Cter in SUMO2) cross-links involve residues K382 and K387. Residues 391 to 418 are disordered; sequence EEEPTTSHGQSSQGLFVEETSEEGNSVP. Positions 400–500 are necessary for interaction with NR6A1 C-terminus; it reads QSSQGLFVEE…EIHTSTFSSS (101 aa). Phosphoserine is present on residues S402 and S420. K429 participates in a covalent cross-link: Glycyl lysine isopeptide (Lys-Gly) (interchain with G-Cter in SUMO2). S467 is modified (phosphoserine). A UBZ4-type zinc finger spans residues 502–529; it reads QVSCPLCDQGFPPTKIERHAMYCNGLMG. Positions 505, 508, 520, and 524 each coordinate Zn(2+). Residues 505–582 are zinc-finger-like region; it reads CPLCDQGFPP…REYQCHVESC (78 aa). Residues K544, K559, K562, and K607 each participate in a glycyl lysine isopeptide (Lys-Gly) (interchain with G-Cter in SUMO2) cross-link. Position 627 is a phosphoserine (S627). Residues K635 and K642 each participate in a glycyl lysine isopeptide (Lys-Gly) (interchain with G-Cter in SUMO2) cross-link. Residues S655 and S679 each carry the phosphoserine modification. Residues K698 and K699 each participate in a glycyl lysine isopeptide (Lys-Gly) (interchain with G-Cter in SUMO2) cross-link.

The protein belongs to the RAP80 family. As to quaternary structure, component of the ARISC complex, at least composed of UIMC1/RAP80, ABRAXAS1, BRCC3/BRCC36, BABAM2 and BABAM1/NBA1. Component of the BRCA1-A complex, at least composed of the BRCA1, BARD1, UIMC1/RAP80, ABRAXAS1, BRCC3/BRCC36, BABAM2 and BABAM1/NBA1. In the BRCA1-A complex, interacts directly with ABRAXAS1. Interacts with UBE2I. Interacts with NR6A1. Interacts with ESR1. Interacts with TSP57. Interacts with TRAIP. Sumoylated. Post-translationally, phosphorylated upon DNA damage by ATM or ATR.

It is found in the nucleus. In terms of biological role, ubiquitin-binding protein. Specifically recognizes and binds 'Lys-63'-linked ubiquitin. Plays a central role in the BRCA1-A complex by specifically binding 'Lys-63'-linked ubiquitinated histones H2A and H2AX at DNA lesions sites, leading to target the BRCA1-BARD1 heterodimer to sites of DNA damage at double-strand breaks (DSBs). The BRCA1-A complex also possesses deubiquitinase activity that specifically removes 'Lys-63'-linked ubiquitin on histones H2A and H2AX. Also weakly binds monoubiquitin but with much less affinity than 'Lys-63'-linked ubiquitin. May interact with monoubiquitinated histones H2A and H2B; the relevance of such results is however unclear in vivo. Does not bind Lys-48'-linked ubiquitin. May indirectly act as a transcriptional repressor by inhibiting the interaction of NR6A1 with the corepressor NCOR1. In Sus scrofa (Pig), this protein is BRCA1-A complex subunit RAP80 (UIMC1).